The sequence spans 63 residues: Large ribosomal subunit protein uL29 (63 aa).

This sequence belongs to the universal ribosomal protein uL29 family.

This is Large ribosomal subunit protein uL29 from Bdellovibrio bacteriovorus (strain ATCC 15356 / DSM 50701 / NCIMB 9529 / HD100).